A 377-amino-acid chain; its full sequence is D-alanine--D-alanine ligase (377 aa).

One can recognise an ATP-grasp domain in the interval 141–347 (KRILNQAGIR…YSELIDRLIQ (207 aa)). 171–226 (KEELGDLVFVKPAKQGSSVGIHKVDTEEEYETAMKDAFTYDYKVLVEAGIKNPREI) contacts ATP. Mg(2+) is bound by residues Asp-301, Glu-314, and Asn-316.

This sequence belongs to the D-alanine--D-alanine ligase family. Mg(2+) is required as a cofactor. The cofactor is Mn(2+).

It is found in the cytoplasm. The catalysed reaction is 2 D-alanine + ATP = D-alanyl-D-alanine + ADP + phosphate + H(+). The protein operates within cell wall biogenesis; peptidoglycan biosynthesis. Cell wall formation. The protein is D-alanine--D-alanine ligase of Limosilactobacillus fermentum (strain NBRC 3956 / LMG 18251) (Lactobacillus fermentum).